We begin with the raw amino-acid sequence, 114 residues long: Protein lin-52 homolog (114 aa).

Residues serine 26 and serine 51 each carry the phosphoserine modification.

The protein belongs to the lin-52 family. As to quaternary structure, component of the DREAM complex (also named LINC complex) at least composed of E2F4, E2F5, LIN9, LIN37, LIN52, LIN54, MYBL1, MYBL2, RBL1, RBL2, RBBP4, TFDP1 and TFDP2. The complex exists in quiescent cells where it represses cell cycle-dependent genes. It dissociates in S phase when LIN9, LIN37, LIN52 and LIN54 form a subcomplex that binds to MYBL2.

This Pongo abelii (Sumatran orangutan) protein is Protein lin-52 homolog (LIN52).